Reading from the N-terminus, the 253-residue chain is 3-deoxy-manno-octulosonate cytidylyltransferase (253 aa).

It belongs to the KdsB family.

The protein resides in the cytoplasm. The catalysed reaction is 3-deoxy-alpha-D-manno-oct-2-ulosonate + CTP = CMP-3-deoxy-beta-D-manno-octulosonate + diphosphate. Its pathway is nucleotide-sugar biosynthesis; CMP-3-deoxy-D-manno-octulosonate biosynthesis; CMP-3-deoxy-D-manno-octulosonate from 3-deoxy-D-manno-octulosonate and CTP: step 1/1. The protein operates within bacterial outer membrane biogenesis; lipopolysaccharide biosynthesis. In terms of biological role, activates KDO (a required 8-carbon sugar) for incorporation into bacterial lipopolysaccharide in Gram-negative bacteria. The sequence is that of 3-deoxy-manno-octulosonate cytidylyltransferase from Haemophilus ducreyi (strain 35000HP / ATCC 700724).